Consider the following 860-residue polypeptide: Beta-glucosidase 1 (860 aa).

Positions 1–19 (MKLSWLEAAALTAASVVSA) are cleaved as a signal peptide. N-linked (GlcNAc...) asparagine glycosylation is found at N61, N211, and N252. The active site involves D280. 12 N-linked (GlcNAc...) asparagine glycosylation sites follow: N315, N322, N354, N387, N442, N523, N542, N564, N658, N668, N690, and N712.

It belongs to the glycosyl hydrolase 3 family.

The catalysed reaction is Hydrolysis of terminal, non-reducing beta-D-glucosyl residues with release of beta-D-glucose.. It participates in glycan metabolism; cellulose degradation. This chain is Beta-glucosidase 1, found in Aspergillus aculeatus.